We begin with the raw amino-acid sequence, 393 residues long: tRNA(Met) cytidine acetate ligase (393 aa).

Residues G81, N142, and R167 each contribute to the ATP site.

This sequence belongs to the TmcAL family.

It localises to the cytoplasm. The enzyme catalyses cytidine(34) in elongator tRNA(Met) + acetate + ATP = N(4)-acetylcytidine(34) in elongator tRNA(Met) + AMP + diphosphate. In terms of biological role, catalyzes the formation of N(4)-acetylcytidine (ac(4)C) at the wobble position of elongator tRNA(Met), using acetate and ATP as substrates. First activates an acetate ion to form acetyladenylate (Ac-AMP) and then transfers the acetyl group to tRNA to form ac(4)C34. In Bacillus thuringiensis subsp. konkukian (strain 97-27), this protein is tRNA(Met) cytidine acetate ligase.